Reading from the N-terminus, the 324-residue chain is Anthranilate phosphoribosyltransferase (324 aa).

5-phospho-alpha-D-ribose 1-diphosphate contacts are provided by residues glycine 75, 78-79 (GD), threonine 83, 85-88 (NVST), 102-110 (KHGNFGITG), and serine 114. Residue glycine 75 coordinates anthranilate. Residue serine 87 coordinates Mg(2+). Asparagine 105 serves as a coordination point for anthranilate. Anthranilate is bound at residue arginine 160. Mg(2+) contacts are provided by aspartate 216 and glutamate 217.

Belongs to the anthranilate phosphoribosyltransferase family. In terms of assembly, homodimer. Requires Mg(2+) as cofactor.

It catalyses the reaction N-(5-phospho-beta-D-ribosyl)anthranilate + diphosphate = 5-phospho-alpha-D-ribose 1-diphosphate + anthranilate. It functions in the pathway amino-acid biosynthesis; L-tryptophan biosynthesis; L-tryptophan from chorismate: step 2/5. Functionally, catalyzes the transfer of the phosphoribosyl group of 5-phosphorylribose-1-pyrophosphate (PRPP) to anthranilate to yield N-(5'-phosphoribosyl)-anthranilate (PRA). This is Anthranilate phosphoribosyltransferase from Picrophilus torridus (strain ATCC 700027 / DSM 9790 / JCM 10055 / NBRC 100828 / KAW 2/3).